A 459-amino-acid polypeptide reads, in one-letter code: Palmitoyltransferase PFA4 (459 aa).

Residues Met-1–Val-9 lie on the Cytoplasmic side of the membrane. Residues Trp-10–Ile-30 form a helical membrane-spanning segment. Residues Trp-31–Glu-37 are Lumenal-facing. Residues Ile-38–Trp-58 traverse the membrane as a helical segment. Residues Asn-59–Gly-138 lie on the Cytoplasmic side of the membrane. Residues Arg-95 to Leu-145 enclose the DHHC domain. The S-palmitoyl cysteine intermediate role is filled by Cys-125. A helical membrane pass occupies residues His-139 to Val-159. The Lumenal portion of the chain corresponds to Arg-160–Asp-177. Residues Val-178–Phe-198 traverse the membrane as a helical segment. The Cytoplasmic portion of the chain corresponds to Ser-199–His-459. Residues His-278–Met-379 form a disordered region. Pro residues predominate over residues Pro-286 to Pro-299. Over residues Asn-310–Leu-322 the composition is skewed to polar residues. Over residues His-331–Asp-356 the composition is skewed to basic and acidic residues.

It belongs to the DHHC palmitoyltransferase family. PFA4 subfamily.

The protein localises to the endoplasmic reticulum membrane. The enzyme catalyses L-cysteinyl-[protein] + hexadecanoyl-CoA = S-hexadecanoyl-L-cysteinyl-[protein] + CoA. Mediates the reversible addition of palmitate to target proteins, thereby regulating their membrane association and biological function. The protein is Palmitoyltransferase PFA4 of Cryptococcus neoformans var. neoformans serotype D (strain B-3501A) (Filobasidiella neoformans).